Consider the following 257-residue polypeptide: tRNA pseudouridine synthase A (257 aa).

Residue Asp-57 is the Nucleophile of the active site. Residue Tyr-115 coordinates substrate.

The protein belongs to the tRNA pseudouridine synthase TruA family. Homodimer.

The enzyme catalyses uridine(38/39/40) in tRNA = pseudouridine(38/39/40) in tRNA. Its function is as follows. Formation of pseudouridine at positions 38, 39 and 40 in the anticodon stem and loop of transfer RNAs. This is tRNA pseudouridine synthase A from Lawsonia intracellularis (strain PHE/MN1-00).